A 109-amino-acid chain; its full sequence is Cell division protein ZapA (109 aa).

A coiled-coil region spans residues 21–100 (PDQRDALNQA…EQALLERGRI (80 aa)).

Belongs to the ZapA family. Type 1 subfamily. Homodimer. Interacts with FtsZ.

Its subcellular location is the cytoplasm. Its function is as follows. Activator of cell division through the inhibition of FtsZ GTPase activity, therefore promoting FtsZ assembly into bundles of protofilaments necessary for the formation of the division Z ring. It is recruited early at mid-cell but it is not essential for cell division. In Shigella dysenteriae serotype 1 (strain Sd197), this protein is Cell division protein ZapA.